The primary structure comprises 157 residues: SsrA-binding protein (157 aa).

Belongs to the SmpB family.

It is found in the cytoplasm. Functionally, required for rescue of stalled ribosomes mediated by trans-translation. Binds to transfer-messenger RNA (tmRNA), required for stable association of tmRNA with ribosomes. tmRNA and SmpB together mimic tRNA shape, replacing the anticodon stem-loop with SmpB. tmRNA is encoded by the ssrA gene; the 2 termini fold to resemble tRNA(Ala) and it encodes a 'tag peptide', a short internal open reading frame. During trans-translation Ala-aminoacylated tmRNA acts like a tRNA, entering the A-site of stalled ribosomes, displacing the stalled mRNA. The ribosome then switches to translate the ORF on the tmRNA; the nascent peptide is terminated with the 'tag peptide' encoded by the tmRNA and targeted for degradation. The ribosome is freed to recommence translation, which seems to be the essential function of trans-translation. This Chlorobaculum tepidum (strain ATCC 49652 / DSM 12025 / NBRC 103806 / TLS) (Chlorobium tepidum) protein is SsrA-binding protein.